The chain runs to 367 residues: Phosphoribosylaminoimidazole-succinocarboxamide synthase (367 aa).

Belongs to the SAICAR synthetase family.

The catalysed reaction is 5-amino-1-(5-phospho-D-ribosyl)imidazole-4-carboxylate + L-aspartate + ATP = (2S)-2-[5-amino-1-(5-phospho-beta-D-ribosyl)imidazole-4-carboxamido]succinate + ADP + phosphate + 2 H(+). It participates in purine metabolism; IMP biosynthesis via de novo pathway; 5-amino-1-(5-phospho-D-ribosyl)imidazole-4-carboxamide from 5-amino-1-(5-phospho-D-ribosyl)imidazole-4-carboxylate: step 1/2. This chain is Phosphoribosylaminoimidazole-succinocarboxamide synthase, found in Aeromonas salmonicida (strain A449).